Reading from the N-terminus, the 465-residue chain is Cruciform DNA-recognizing protein 1 (465 aa).

2 disordered regions span residues 107–227 and 247–275; these read EAGG…VPNP and RLNKKEEVPEPVAGPIVESSVTEKSPALP. Residues 127–151 are compositionally biased toward basic residues; that stretch reads NRKKNKRNNKKRKSKLKKKSTKNNK. A phosphoserine mark is found at Ser-153 and Ser-156. Residues 156-165 show a composition bias toward acidic residues; sequence SXDDNEEEDX. The segment at 160 to 161 is X-DNA-binding; the sequence is NE. Residues 166–177 are compositionally biased toward low complexity; the sequence is VTGTTTEDVTGT. The residue at position 182 (Thr-182) is a Phosphothreonine. Ser-271 is modified (phosphoserine). Residue Thr-295 is modified to Phosphothreonine. Residues 312–465 form a disordered region; sequence PTPEAQISIP…FFGKLKKLFK (154 aa). 2 positions are modified to phosphoserine: Ser-319 and Ser-343. Residues 337–363 are compositionally biased toward basic and acidic residues; that stretch reads LVEKRESTEGVSDGSKKVENKAKKDEE. Phosphothreonine is present on Thr-366. Composition is skewed to basic and acidic residues over residues 385–398 and 404–428; these read AEGRKSPAVSEEKE and EKGSKEVKRSETSKEKKPSAKEVKK. Ser-394 is subject to Phosphoserine. Residue Ser-440 is modified to Phosphoserine. Positions 451 to 465 are enriched in basic residues; the sequence is KKKTGFFGKLKKLFK.

Belongs to the CRP1/MDG1 family. Cleaved in the vicinity of position 160 to give an X-DNA-binding N-terminal subpeptide and a non-DNA-binding C-terminal subpeptide.

Cruciform DNA-binding protein which exerts an enhancing effect on the cleavage of cruciform DNA (X-DNA) by endonuclease VII from bacteriophage T4. This Saccharomyces cerevisiae (strain FostersB) (Baker's yeast) protein is Cruciform DNA-recognizing protein 1 (CRP1).